The sequence spans 280 residues: Shikimate dehydrogenase (NADP(+)) (280 aa).

Residues 20–22 and threonine 67 each bind shikimate; that span reads SLS. The active-site Proton acceptor is lysine 71. Glutamate 83 provides a ligand contact to NADP(+). Shikimate contacts are provided by asparagine 92 and aspartate 107. NADP(+) contacts are provided by residues 131–135, 155–160, and leucine 224; these read GAGGA and NRTLNK. Residue tyrosine 226 participates in shikimate binding. NADP(+) is bound at residue glycine 247.

The protein belongs to the shikimate dehydrogenase family. Homodimer.

The catalysed reaction is shikimate + NADP(+) = 3-dehydroshikimate + NADPH + H(+). The protein operates within metabolic intermediate biosynthesis; chorismate biosynthesis; chorismate from D-erythrose 4-phosphate and phosphoenolpyruvate: step 4/7. Involved in the biosynthesis of the chorismate, which leads to the biosynthesis of aromatic amino acids. Catalyzes the reversible NADPH linked reduction of 3-dehydroshikimate (DHSA) to yield shikimate (SA). This chain is Shikimate dehydrogenase (NADP(+)), found in Caldanaerobacter subterraneus subsp. tengcongensis (strain DSM 15242 / JCM 11007 / NBRC 100824 / MB4) (Thermoanaerobacter tengcongensis).